A 311-amino-acid chain; its full sequence is tRNA dimethylallyltransferase (311 aa).

19-26 (GPSGSGKS) lines the ATP pocket. 21–26 (SGSGKS) lines the substrate pocket. The interaction with substrate tRNA stretch occupies residues 44–47 (DSLS).

Belongs to the IPP transferase family. As to quaternary structure, monomer. The cofactor is Mg(2+).

The enzyme catalyses adenosine(37) in tRNA + dimethylallyl diphosphate = N(6)-dimethylallyladenosine(37) in tRNA + diphosphate. Catalyzes the transfer of a dimethylallyl group onto the adenine at position 37 in tRNAs that read codons beginning with uridine, leading to the formation of N6-(dimethylallyl)adenosine (i(6)A). The protein is tRNA dimethylallyltransferase of Helicobacter pylori (strain ATCC 700392 / 26695) (Campylobacter pylori).